A 434-amino-acid chain; its full sequence is Enolase (434 aa).

Residue glutamine 167 coordinates (2R)-2-phosphoglycerate. The Proton donor role is filled by glutamate 209. The Mg(2+) site is built by aspartate 246, glutamate 291, and aspartate 318. Residues lysine 343, arginine 372, serine 373, and lysine 394 each coordinate (2R)-2-phosphoglycerate. Residue lysine 343 is the Proton acceptor of the active site.

It belongs to the enolase family. As to quaternary structure, component of the RNA degradosome, a multiprotein complex involved in RNA processing and mRNA degradation. Requires Mg(2+) as cofactor.

It localises to the cytoplasm. It is found in the secreted. The protein localises to the cell surface. The enzyme catalyses (2R)-2-phosphoglycerate = phosphoenolpyruvate + H2O. It participates in carbohydrate degradation; glycolysis; pyruvate from D-glyceraldehyde 3-phosphate: step 4/5. Functionally, catalyzes the reversible conversion of 2-phosphoglycerate (2-PG) into phosphoenolpyruvate (PEP). It is essential for the degradation of carbohydrates via glycolysis. This chain is Enolase, found in Buchnera aphidicola subsp. Acyrthosiphon pisum (strain APS) (Acyrthosiphon pisum symbiotic bacterium).